The sequence spans 405 residues: Cytoplasmic tRNA 2-thiolation protein 2 (405 aa).

This sequence belongs to the CTU2/NCS2 family.

It is found in the cytoplasm. It participates in tRNA modification; 5-methoxycarbonylmethyl-2-thiouridine-tRNA biosynthesis. Functionally, plays a central role in 2-thiolation of mcm(5)S(2)U at tRNA wobble positions of tRNA(Lys), tRNA(Glu) and tRNA(Gln). May act by forming a heterodimer with NCS6/CTU1 that ligates sulfur from thiocarboxylated URM1 onto the uridine of tRNAs at wobble position. The sequence is that of Cytoplasmic tRNA 2-thiolation protein 2 from Drosophila pseudoobscura pseudoobscura (Fruit fly).